The primary structure comprises 130 residues: Small ribosomal subunit protein eS8 (130 aa).

This sequence belongs to the eukaryotic ribosomal protein eS8 family. In terms of assembly, part of the 30S ribosomal subunit.

This Thermococcus gammatolerans (strain DSM 15229 / JCM 11827 / EJ3) protein is Small ribosomal subunit protein eS8.